The sequence spans 52 residues: Large ribosomal subunit protein bL33 (52 aa).

This sequence belongs to the bacterial ribosomal protein bL33 family.

This chain is Large ribosomal subunit protein bL33, found in Campylobacter jejuni subsp. doylei (strain ATCC BAA-1458 / RM4099 / 269.97).